The chain runs to 372 residues: Methenyltetrahydrofolate synthase domain-containing protein (372 aa).

The segment covering 246-258 (KQAGKDVTLRDEP) has biased composition (basic and acidic residues). The interval 246-289 (KQAGKDVTLRDEPGSQQPAPGPIRRPQDRPQTGSRGGSRSPLQG) is disordered. Residues 296 to 369 (ATVCVGNLPF…NALRVSLGQQ (74 aa)) enclose the RRM domain.

This Mus musculus (Mouse) protein is Methenyltetrahydrofolate synthase domain-containing protein (Mthfsd).